Reading from the N-terminus, the 371-residue chain is Chaperone protein DnaJ (371 aa).

The J domain maps to 5 to 69; it reads DYYEVLGLSK…QKRAQYDQFG (65 aa). A CR-type zinc finger spans residues 133–215; the sequence is GKELNVEIPV…CHGSGKVRKR (83 aa). Zn(2+) contacts are provided by C146, C149, C163, C166, C189, C192, C203, and C206. CXXCXGXG motif repeat units lie at residues 146–153, 163–170, 189–196, and 203–210; these read CDTCKGSG, CKHCSGSG, CGHCSGTG, and CTTCHGSG.

Belongs to the DnaJ family. In terms of assembly, homodimer. The cofactor is Zn(2+).

The protein localises to the cytoplasm. Functionally, participates actively in the response to hyperosmotic and heat shock by preventing the aggregation of stress-denatured proteins and by disaggregating proteins, also in an autonomous, DnaK-independent fashion. Unfolded proteins bind initially to DnaJ; upon interaction with the DnaJ-bound protein, DnaK hydrolyzes its bound ATP, resulting in the formation of a stable complex. GrpE releases ADP from DnaK; ATP binding to DnaK triggers the release of the substrate protein, thus completing the reaction cycle. Several rounds of ATP-dependent interactions between DnaJ, DnaK and GrpE are required for fully efficient folding. Also involved, together with DnaK and GrpE, in the DNA replication of plasmids through activation of initiation proteins. The chain is Chaperone protein DnaJ from Bacillus cereus (strain G9842).